Consider the following 469-residue polypeptide: DNA repair and recombination protein rad22 (469 aa).

The interval 265–296 (PAANNHHSEKAGTQINNKDKGSHNSAKPVQRS) is disordered. Residues 287-296 (HNSAKPVQRS) show a composition bias toward polar residues. Phosphoserine is present on residues S296 and S319. Positions 429–469 (LHDSTTSHNKSDLMRTNSDPQSAMRSRENYDATVDKKAKKG) are disordered. A compositionally biased stretch (polar residues) spans 431–452 (DSTTSHNKSDLMRTNSDPQSAM). Positions 453-469 (RSRENYDATVDKKAKKG) are enriched in basic and acidic residues.

This sequence belongs to the RAD52 family. In terms of assembly, interacts with rhp51.

The protein localises to the nucleus. Its function is as follows. Active in the repair of DNA damage and in mating-type switching. Probably involved in the repair of DNA double-strands breaks. Has a role in promoting S phase completion. The sequence is that of DNA repair and recombination protein rad22 (rad22) from Schizosaccharomyces pombe (strain 972 / ATCC 24843) (Fission yeast).